A 381-amino-acid chain; its full sequence is NF-kappa-B inhibitor-like protein 1 (381 aa).

Residues 1–34 are disordered; the sequence is MSNPSPQVPEEEASTSVCRPKSSMASTSRRQRRE. ANK repeat units lie at residues 64-93 and 97-130; these read GQPP…DPAH and HGDT…AMGI. Disordered stretches follow at residues 129-167 and 186-294; these read GIKN…EWRQ and GDAS…RGSL. S150 carries the post-translational modification Phosphoserine. Residues 150 to 159 show a composition bias toward acidic residues; it reads SAEEEEEDDA. Basic and acidic residues-rich tracts occupy residues 218-228 and 238-287; these read REAEGSRRPPR and QQEE…EHPR.

As to quaternary structure, interacts with CACTIN (via N-terminal domain); the interaction occurs in a proinflammatory-independent manner. Detected in different cell types including monocytes, T-cells, B-cells and hepatocytes.

The protein resides in the nucleus. Its function is as follows. Involved in the regulation of innate immune response. Acts as negative regulator of Toll-like receptor and interferon-regulatory factor (IRF) signaling pathways. Contributes to the negative regulation of transcriptional activation of NF-kappa-B target genes in response to endogenous proinflammatory stimuli. The sequence is that of NF-kappa-B inhibitor-like protein 1 (NFKBIL1) from Homo sapiens (Human).